The primary structure comprises 253 residues: uncharacterized protein (253 aa).

This is an uncharacterized protein from Haemophilus influenzae (strain ATCC 51907 / DSM 11121 / KW20 / Rd).